A 595-amino-acid chain; its full sequence is DNA primase (595 aa).

Residues 38–62 (CPFHDEKTPSFIVYPTRGHYHCYGC) form a CHC2-type zinc finger. In terms of domain architecture, Toprim spans 251 to 331 (RRVILVEGQA…GITAIVCRLP (81 aa)). Residues glutamate 257, aspartate 302, and aspartate 304 each contribute to the Mg(2+) site. Over residues 430-441 (KGKKVSAKEPSS) the composition is skewed to basic and acidic residues. Positions 430-451 (KGKKVSAKEPSSESKQTSTEGK) are disordered.

Belongs to the DnaG primase family. Monomer. Interacts with DnaB. It depends on Zn(2+) as a cofactor. Mg(2+) is required as a cofactor.

The catalysed reaction is ssDNA + n NTP = ssDNA/pppN(pN)n-1 hybrid + (n-1) diphosphate.. Its function is as follows. RNA polymerase that catalyzes the synthesis of short RNA molecules used as primers for DNA polymerase during DNA replication. This chain is DNA primase, found in Chlamydia trachomatis serovar D (strain ATCC VR-885 / DSM 19411 / UW-3/Cx).